Consider the following 290-residue polypeptide: ATP synthase gamma chain (290 aa).

The protein belongs to the ATPase gamma chain family. As to quaternary structure, F-type ATPases have 2 components, CF(1) - the catalytic core - and CF(0) - the membrane proton channel. CF(1) has five subunits: alpha(3), beta(3), gamma(1), delta(1), epsilon(1). CF(0) has three main subunits: a, b and c.

Its subcellular location is the cell inner membrane. Its function is as follows. Produces ATP from ADP in the presence of a proton gradient across the membrane. The gamma chain is believed to be important in regulating ATPase activity and the flow of protons through the CF(0) complex. The chain is ATP synthase gamma chain from Desulfotalea psychrophila (strain LSv54 / DSM 12343).